Reading from the N-terminus, the 320-residue chain is D-amino-acid oxidase (320 aa).

The FAD site is built by Gly-18, Gly-19, Val-20, Ile-21, Thr-47, Thr-48, Ser-49, Gly-53, Gly-54, Leu-55, Val-161, and Thr-176. The D-proline site is built by Tyr-220 and Arg-275. The D-serine site is built by Tyr-220 and Arg-275. FAD-binding residues include Arg-275, Gly-301, Gly-302, Gly-304, and Thr-306. Gly-302 is a binding site for D-proline. Gly-302 lines the D-serine pocket.

Belongs to the DAMOX/DASOX family. The cofactor is FAD.

It localises to the cytoplasm. The protein resides in the secreted. The protein localises to the cell wall. The catalysed reaction is a D-alpha-amino acid + O2 + H2O = a 2-oxocarboxylate + H2O2 + NH4(+). It carries out the reaction D-leucine + O2 + H2O = 4-methyl-2-oxopentanoate + H2O2 + NH4(+). It catalyses the reaction D-valine + O2 + H2O = 3-methyl-2-oxobutanoate + H2O2 + NH4(+). The enzyme catalyses D-isoleucine + O2 + H2O = (R)-3-methyl-2-oxopentanoate + H2O2 + NH4(+). The catalysed reaction is D-methionine + O2 + H2O = 4-methylsulfanyl-2-oxobutanoate + H2O2 + NH4(+). Functionally, catalyzes the oxidative deamination of D-amino acids with broad substrate specificity. This Streptomyces coelicolor (strain ATCC BAA-471 / A3(2) / M145) protein is D-amino-acid oxidase.